The primary structure comprises 113 residues: MAGIRALFMYLWLQLDWVSRGESVGLHLPTLSVQEGDNSIINCAYSNSASDYFIWYKQESGKGPQFIIDIRSNMDKRQGQRVTVLLNKTVKHLSLQIAATQPGDSAVYFCAEN.

An N-terminal signal peptide occupies residues 1-21; that stretch reads MAGIRALFMYLWLQLDWVSRG. The Ig-like domain maps to 22 to 113; it reads ESVGLHLPTL…DSAVYFCAEN (92 aa). A disulfide bridge connects residues cysteine 43 and cysteine 110. Asparagine 87 carries N-linked (GlcNAc...) asparagine glycosylation.

In terms of assembly, alpha-beta TR is a heterodimer composed of an alpha and beta chain; disulfide-linked. The alpha-beta TR is associated with the transmembrane signaling CD3 coreceptor proteins to form the TR-CD3 (TcR or TCR). The assembly of alpha-beta TR heterodimers with CD3 occurs in the endoplasmic reticulum where a single alpha-beta TR heterodimer associates with one CD3D-CD3E heterodimer, one CD3G-CD3E heterodimer and one CD247 homodimer forming a stable octameric structure. CD3D-CD3E and CD3G-CD3E heterodimers preferentially associate with TR alpha and TR beta chains, respectively. The association of the CD247 homodimer is the last step of TcR assembly in the endoplasmic reticulum and is required for transport to the cell surface.

It is found in the cell membrane. In terms of biological role, v region of the variable domain of T cell receptor (TR) alpha chain that participates in the antigen recognition. Alpha-beta T cell receptors are antigen specific receptors which are essential to the immune response and are present on the cell surface of T lymphocytes. Recognize peptide-major histocompatibility (MH) (pMH) complexes that are displayed by antigen presenting cells (APC), a prerequisite for efficient T cell adaptive immunity against pathogens. Binding of alpha-beta TR to pMH complex initiates TR-CD3 clustering on the cell surface and intracellular activation of LCK that phosphorylates the ITAM motifs of CD3G, CD3D, CD3E and CD247 enabling the recruitment of ZAP70. In turn ZAP70 phosphorylates LAT, which recruits numerous signaling molecules to form the LAT signalosome. The LAT signalosome propagates signal branching to three major signaling pathways, the calcium, the mitogen-activated protein kinase (MAPK) kinase and the nuclear factor NF-kappa-B (NF-kB) pathways, leading to the mobilization of transcription factors that are critical for gene expression and essential for T cell growth and differentiation. The T cell repertoire is generated in the thymus, by V-(D)-J rearrangement. This repertoire is then shaped by intrathymic selection events to generate a peripheral T cell pool of self-MH restricted, non-autoaggressive T cells. Post-thymic interaction of alpha-beta TR with the pMH complexes shapes TR structural and functional avidity. The protein is T cell receptor alpha variable 13-2 of Homo sapiens (Human).